The primary structure comprises 242 residues: Segregation and condensation protein A (242 aa).

The protein belongs to the ScpA family. In terms of assembly, component of a cohesin-like complex composed of ScpA, ScpB and the Smc homodimer, in which ScpA and ScpB bind to the head domain of Smc. The presence of the three proteins is required for the association of the complex with DNA.

Its subcellular location is the cytoplasm. In terms of biological role, participates in chromosomal partition during cell division. May act via the formation of a condensin-like complex containing Smc and ScpB that pull DNA away from mid-cell into both cell halves. This is Segregation and condensation protein A from Streptococcus pneumoniae serotype 19F (strain G54).